A 307-amino-acid polypeptide reads, in one-letter code: Protein FAM76A (307 aa).

Disordered stretches follow at residues 142-195 (QRKH…ESIT) and 287-307 (KQAAALSKSKKSEKSGAITSP). A compositionally biased stretch (polar residues) spans 161–182 (SRLSGGSHYNSQKTLSTSSIQN). The stretch at 217 to 299 (IIAQLKEEVA…AALSKSKKSE (83 aa)) forms a coiled coil.

This sequence belongs to the FAM76 family.

The chain is Protein FAM76A (FAM76A) from Bos taurus (Bovine).